Reading from the N-terminus, the 162-residue chain is Shikimate kinase (162 aa).

ATP is bound at residue 10-15; that stretch reads GAGKST. Ser14 contacts Mg(2+). Substrate is bound by residues Asp28, Arg52, and Gly73. Arg113 provides a ligand contact to ATP. Arg129 contacts substrate.

It belongs to the shikimate kinase family. As to quaternary structure, monomer. Requires Mg(2+) as cofactor.

The protein resides in the cytoplasm. The catalysed reaction is shikimate + ATP = 3-phosphoshikimate + ADP + H(+). The protein operates within metabolic intermediate biosynthesis; chorismate biosynthesis; chorismate from D-erythrose 4-phosphate and phosphoenolpyruvate: step 5/7. In terms of biological role, catalyzes the specific phosphorylation of the 3-hydroxyl group of shikimic acid using ATP as a cosubstrate. The sequence is that of Shikimate kinase from Lactococcus lactis subsp. lactis (strain IL1403) (Streptococcus lactis).